Reading from the N-terminus, the 1403-residue chain is Baculoviral IAP repeat-containing protein 1f (1403 aa).

BIR repeat units follow at residues 60–127, 159–227, and 278–345; these read EAKR…CEFL, EEAR…CEFL, and EELR…CVFL. Residues C315, C318, H335, and C342 each contribute to the Zn(2+) site. Residues 464–759 enclose the NACHT domain; the sequence is SVMCVEGEAG…EFLAAVRLTE (296 aa). An ATP-binding site is contributed by 473–478; sequence GSGKTT.

As to quaternary structure, component of the NLRC4 inflammasome, at least composed of NLRC4, caspase-1 (CASP1) and some NAIP protein. In terms of assembly, (Microbial infection) Interacts with S.typhimurium (Salmonella) flagellin.

Sensor component of the NLRC4 inflammasome that specifically recognizes and binds flagellin from pathogenic bacteria. Association of pathogenic bacteria proteins drives in turn drive assembly and activation of the NLRC4 inflammasome, promoting caspase-1 activation, cytokine production and macrophage pyroptosis. The NLRC4 inflammasome is activated as part of the innate immune response to a range of intracellular bacteria. The NLRC4 inflammasome senses Gram-negative bacteria such as L.pneumophila and P.aeruginosa, enteric pathogens S.typhimurium (Salmonella) and S.flexneri. May contribute to prevent motor-neuron apoptosis induced by a variety of signals. This chain is Baculoviral IAP repeat-containing protein 1f (Naip6), found in Mus musculus (Mouse).